A 455-amino-acid chain; its full sequence is Chromosomal replication initiator protein DnaA (455 aa).

Residues 1 to 74 form a domain I, interacts with DnaA modulators region; that stretch reads MSEQEIWEKV…LYEAIGHEIA (74 aa). A domain II region spans residues 74-116; sequence APVFYTEEELKSLHTSEQKEENQPEQPAKKYTPGVDEAVIGGE. A compositionally biased stretch (basic and acidic residues) spans 85 to 95; that stretch reads SLHTSEQKEEN. The segment at 85 to 104 is disordered; that stretch reads SLHTSEQKEENQPEQPAKKY. The segment at 117 to 333 is domain III, AAA+ region; it reads QFNTHNTFET…GALTRVLAFS (217 aa). The ATP site is built by G161, G163, K164, and T165. A domain IV, binds dsDNA region spans residues 334–455; it reads KLQGQPITTE…ENLEKEIRNQ (122 aa).

This sequence belongs to the DnaA family. In terms of assembly, oligomerizes as a right-handed, spiral filament on DNA at oriC.

It localises to the cytoplasm. In terms of biological role, plays an essential role in the initiation and regulation of chromosomal replication. ATP-DnaA binds to the origin of replication (oriC) to initiate formation of the DNA replication initiation complex once per cell cycle. Binds the DnaA box (a 9 base pair repeat at the origin) and separates the double-stranded (ds)DNA. Forms a right-handed helical filament on oriC DNA; dsDNA binds to the exterior of the filament while single-stranded (ss)DNA is stabiized in the filament's interior. The ATP-DnaA-oriC complex binds and stabilizes one strand of the AT-rich DNA unwinding element (DUE), permitting loading of DNA polymerase. After initiation quickly degrades to an ADP-DnaA complex that is not apt for DNA replication. Binds acidic phospholipids. This is Chromosomal replication initiator protein DnaA from Staphylococcus saprophyticus subsp. saprophyticus (strain ATCC 15305 / DSM 20229 / NCIMB 8711 / NCTC 7292 / S-41).